The chain runs to 867 residues: Cation/H(+) antiporter 23, chloroplastic (867 aa).

Transmembrane regions (helical) follow at residues 43-63, 75-95, 112-132, 146-166, 175-195, 212-232, 242-262, 283-303, 336-356, 362-382, 393-413, and 427-447; these read SGST…VANL, LYLP…PSVL, MVLE…LGLG, VIIA…LYYL, IISG…PDLA, AMCA…FGFA, KMMP…IFVI, HVWF…ACGV, GILM…GFML, FMMV…TVIT, AFAI…VLNA, and HMTI…AFAY. The segment at 848 to 867 is disordered; that stretch reads SMYEDEDEDDEEDHQYGIHR. Positions 851–860 are enriched in acidic residues; the sequence is EDEDEDDEED.

It belongs to the monovalent cation:proton antiporter 2 (CPA2) transporter (TC 2.A.37) family. CHX (TC 2.A.37.4) subfamily. As to expression, specifically expressed in flower buds and pollen. Expressed in leaves, roots and stems.

The protein resides in the plastid. It localises to the chloroplast membrane. It is found in the endoplasmic reticulum membrane. Its function is as follows. Operates as a K(+)/H(+) antiporter or Na(+)/H(+) antiporter of the chloroplast envelope that functions in pH homeostasis and chloroplast development. Monovalent cation transporter with a preference for Cs(+), K(+) and Rb(+) relative to Na(+) or Li(+). Required for pollen tube guidance, but not for normal pollen development. May also be involved in the development or function of the female gametophyte. This is Cation/H(+) antiporter 23, chloroplastic (CHX23) from Arabidopsis thaliana (Mouse-ear cress).